We begin with the raw amino-acid sequence, 1487 residues long: Major viral transcription factor (1487 aa).

Disordered regions lie at residues 41-295 (AAPD…LPPG), 310-370 (LAKT…AEEA), and 803-1007 (PPTR…HTPR). A compositionally biased stretch (pro residues) spans 66-75 (VIPPPSPTPE). Low complexity-rich tracts occupy residues 165–193 (PSSA…SSSS) and 201–213 (DGAG…SSSS). Residues 214 to 224 (DDSDSDEGGEE) show a composition bias toward acidic residues. The segment covering 235–272 (AAKTPSAAGSPGPSSGGDRPAAGAATPKSCRSGAASPG) has biased composition (low complexity). A compositionally biased stretch (pro residues) spans 273-285 (APAPAPASAPAPS). Composition is skewed to low complexity over residues 807 to 829 (SQQP…AEGS), 849 to 860 (PSSHSQSPQHSQ), and 867 to 877 (ATTATCCRATQ). Residues 878 to 893 (TNARSRGQQHQPQKAR) are compositionally biased toward polar residues. Over residues 920-929 (HGRPRGKSGK) the composition is skewed to basic residues. Over residues 938-951 (AAQAGASASFSSSA) the composition is skewed to low complexity. The segment covering 988–1007 (GPDRRGGFRRVPRGDCHTPR) has biased composition (basic and acidic residues).

The protein belongs to the herpesviridae ICP4 family. In terms of processing, a long stretch of serine residues may be a major site of phosphorylation.

The protein localises to the host nucleus. Functionally, this IE protein is a multifunctional protein capable of migrating to the nucleus, binding to DNA, trans-activating other viral genes, and autoregulating its own synthesis. The chain is Major viral transcription factor (IE) from Equine herpesvirus 1 (strain Ab4p) (EHV-1).